Reading from the N-terminus, the 233-residue chain is Orotidine 5'-phosphate decarboxylase (233 aa).

Substrate-binding positions include aspartate 10, lysine 32, 60-69 (DLKLHDIPAT), threonine 115, arginine 176, glutamine 185, glycine 205, and arginine 206. Residue lysine 62 is the Proton donor of the active site.

Belongs to the OMP decarboxylase family. Type 1 subfamily. Homodimer.

The enzyme catalyses orotidine 5'-phosphate + H(+) = UMP + CO2. The protein operates within pyrimidine metabolism; UMP biosynthesis via de novo pathway; UMP from orotate: step 2/2. In terms of biological role, catalyzes the decarboxylation of orotidine 5'-monophosphate (OMP) to uridine 5'-monophosphate (UMP). The protein is Orotidine 5'-phosphate decarboxylase of Thermobifida fusca (strain YX).